Reading from the N-terminus, the 101-residue chain is MKLSVYIILSILFISTVFYEIQFTEARQLRKTDDQDHDDHHFTVGYTDDFGPTSPGNSPGIGHKMKENEENAGGYKDDFEPTTPGHSPGVGHAVKNNEPNA.

An N-terminal signal peptide occupies residues 1–26 (MKLSVYIILSILFISTVFYEIQFTEA). Positions 27 to 48 (RQLRKTDDQDHDDHHFTVGYTD) are excised as a propeptide. The segment covering 29–42 (LRKTDDQDHDDHHF) has biased composition (basic and acidic residues). The segment at 29-101 (LRKTDDQDHD…HAVKNNEPNA (73 aa)) is disordered. Hydroxyproline is present on residues proline 52, proline 55, and proline 59. A propeptide spanning residues 64 to 77 (KMKENEENAGGYKD) is cleaved from the precursor. Residues 64-79 (KMKENEENAGGYKDDF) show a composition bias toward basic and acidic residues. Proline 81, proline 84, and proline 88 each carry hydroxyproline. Residues 93 to 101 (AVKNNEPNA) constitute a propeptide that is removed on maturation.

This sequence belongs to the C-terminally encoded plant signaling peptide (CEP) family. In terms of assembly, interacts with CEP receptors (e.g. CEPR1 and CEPR2). The mature small signaling peptide is generated by proteolytic processing of the longer precursor. As to expression, expressed in lateral root primordia and in lateral roots excluding the meristem region. Also present in the aerial tissues, such as leaf petioles and the shoot apex region.

It is found in the secreted. Its subcellular location is the extracellular space. The protein localises to the apoplast. Its function is as follows. Extracellular signaling peptide that represses primary root growth rate. Modulates leaf morphology. Regulates systemic nitrogen (N)-demand signaling. Mediates up-regulation of genes involved in N uptake and assimilation pathways. The chain is Precursor of CEP6 from Arabidopsis thaliana (Mouse-ear cress).